Here is a 346-residue protein sequence, read N- to C-terminus: UDP-N-acetylenolpyruvoylglucosamine reductase (346 aa).

An FAD-binding PCMH-type domain is found at 18–189 (LRAQARAFIA…VSVVFALKTH (172 aa)). Residue R165 is part of the active site. The Proton donor role is filled by S240. E336 is a catalytic residue.

It belongs to the MurB family. Requires FAD as cofactor.

The protein resides in the cytoplasm. It carries out the reaction UDP-N-acetyl-alpha-D-muramate + NADP(+) = UDP-N-acetyl-3-O-(1-carboxyvinyl)-alpha-D-glucosamine + NADPH + H(+). Its pathway is cell wall biogenesis; peptidoglycan biosynthesis. Functionally, cell wall formation. The sequence is that of UDP-N-acetylenolpyruvoylglucosamine reductase from Neisseria meningitidis serogroup B (strain ATCC BAA-335 / MC58).